We begin with the raw amino-acid sequence, 1921 residues long: Mediator of RNA polymerase II transcription subunit 13 (1921 aa).

Glycyl lysine isopeptide (Lys-Gly) (interchain with G-Cter in ubiquitin) cross-links involve residues Lys220 and Lys226. Disordered regions lie at residues 400-434 (YEKN…TSRT), 702-724 (TQVE…NSST), and 1485-1528 (SPTF…GDVS). The segment covering 407–427 (SSGSSRNSSISSTSSASSGSG) has biased composition (low complexity). Composition is skewed to polar residues over residues 1486-1496 (PTFTSLGSESS) and 1515-1527 (EGIT…QGDV).

Belongs to the Mediator complex subunit 13 family. In terms of assembly, component of the Mediator complex. Interacts with CYCC1-2 (CDK8 homolog). Ubiquitous. Highest expression in the shoot apex.

It localises to the nucleus. Functionally, component of the Mediator complex, a coactivator involved in the regulated transcription of nearly all RNA polymerase II-dependent genes. Mediator functions as a bridge to convey information from gene-specific regulatory proteins to the basal RNA polymerase II transcription machinery. The Mediator complex, having a compact conformation in its free form, is recruited to promoters by direct interactions with regulatory proteins and serves for the assembly of a functional preinitiation complex with RNA polymerase II and the general transcription factors. Acts closely together with MAB12. Involved in the regulation of embryo patterning and cotyledon organogenesis. May act through transient repression of specific genes such as the ones responsive to auxin. In Arabidopsis thaliana (Mouse-ear cress), this protein is Mediator of RNA polymerase II transcription subunit 13 (MED13).